The following is a 1822-amino-acid chain: ADP-ribosylation factor guanine nucleotide-exchange factor sec72 (1822 aa).

Disordered regions lie at residues 1-54 and 66-126; these read MQDA…NGMD and DAVV…RASL. S44 carries the post-translational modification Phosphoserine. Positions 72-84 are enriched in polar residues; that stretch reads DINTEDSSLSPAK. Over residues 85–110 the composition is skewed to basic and acidic residues; it reads QENEKSPEGIEQKYQEEDLKDDKKSN. Phosphoserine is present on residues S122 and S125. Residues 547-551 carry the HUS box motif; the sequence is NYDCD. At T597 the chain carries Phosphothreonine. S653 carries the phosphoserine modification. A Phosphothreonine modification is found at T654. S669 carries the post-translational modification Phosphoserine. Positions 701-889 constitute an SEC7 domain; the sequence is QFESNKQRKK…GFVYDDILKN (189 aa). The tract at residues 898–1106 is HDS1 domain; the sequence is ELAAIAPLMN…NARVRRKNVN (209 aa). S1110 is modified (phosphoserine). 2 disordered regions span residues 1111-1131 and 1584-1610; these read NSIRHVSGSTSRSTRTRSLSK and ENENTQLSHKRGGSLPETSRSISTSSI. 2 stretches are compositionally biased toward low complexity: residues 1117–1130 and 1597–1610; these read SGSTSRSTRTRSLS and SLPETSRSISTSSI. Phosphoserine is present on residues S1606 and S1609.

The protein localises to the cytoplasm. Its subcellular location is the golgi apparatus. It is found in the trans-Golgi network. It localises to the cytoplasmic vesicle. The protein resides in the COPI-coated vesicle membrane. The protein localises to the COPII-coated vesicle membrane. Guanine exchange factor that acts as an activator of arf1 at the trans-Golgi net-work and is thus involved in vesicular budding and traffic between compartments of the Golgi apparatus. Activation of Arf (ADP-ribosylation factor) GTPases is essential for vesicle formation via recruitment of cargo adapters and coat proteins necessary for Golgi trafficking. Involved in the resistance to tamoxifen (TAM), an anticancer drug used to treat estrogen receptor (ER)-positive breast cancer. The polypeptide is ADP-ribosylation factor guanine nucleotide-exchange factor sec72 (Schizosaccharomyces pombe (strain 972 / ATCC 24843) (Fission yeast)).